The primary structure comprises 758 residues: 5-methyltetrahydropteroyltriglutamate--homocysteine methyltransferase (758 aa).

Residues 16-19 (RELK) and Lys-116 each bind 5-methyltetrahydropteroyltri-L-glutamate. L-homocysteine is bound by residues 436–438 (IGS) and Glu-489. L-methionine contacts are provided by residues 436–438 (IGS) and Glu-489. Residues 520 to 521 (RC) and Trp-566 each bind 5-methyltetrahydropteroyltri-L-glutamate. Asp-604 provides a ligand contact to L-homocysteine. Asp-604 contacts L-methionine. Glu-610 lines the 5-methyltetrahydropteroyltri-L-glutamate pocket. Zn(2+) is bound by residues His-646, Cys-648, and Glu-670. His-699 acts as the Proton donor in catalysis. Residue Cys-731 coordinates Zn(2+).

The protein belongs to the vitamin-B12 independent methionine synthase family. Zn(2+) serves as cofactor.

It carries out the reaction 5-methyltetrahydropteroyltri-L-glutamate + L-homocysteine = tetrahydropteroyltri-L-glutamate + L-methionine. It participates in amino-acid biosynthesis; L-methionine biosynthesis via de novo pathway; L-methionine from L-homocysteine (MetE route): step 1/1. Catalyzes the transfer of a methyl group from 5-methyltetrahydrofolate to homocysteine resulting in methionine formation. The chain is 5-methyltetrahydropteroyltriglutamate--homocysteine methyltransferase from Xylella fastidiosa (strain 9a5c).